A 376-amino-acid polypeptide reads, in one-letter code: Chaperone protein DnaJ (376 aa).

The J domain occupies 5 to 69 (DYYEVLGISK…QKRAQYDQYG (65 aa)). Residues 133–215 (GKDAEIEIPR…CHGKGRVTKT (83 aa)) form a CR-type zinc finger. 8 residues coordinate Zn(2+): Cys-146, Cys-149, Cys-163, Cys-166, Cys-189, Cys-192, Cys-203, and Cys-206. CXXCXGXG motif repeat units lie at residues 146-153 (CDTCHGSG), 163-170 (CSHCGGKG), 189-196 (CQYCNGTG), and 203-210 (CPTCHGKG).

Belongs to the DnaJ family. In terms of assembly, homodimer. It depends on Zn(2+) as a cofactor.

It localises to the cytoplasm. Participates actively in the response to hyperosmotic and heat shock by preventing the aggregation of stress-denatured proteins and by disaggregating proteins, also in an autonomous, DnaK-independent fashion. Unfolded proteins bind initially to DnaJ; upon interaction with the DnaJ-bound protein, DnaK hydrolyzes its bound ATP, resulting in the formation of a stable complex. GrpE releases ADP from DnaK; ATP binding to DnaK triggers the release of the substrate protein, thus completing the reaction cycle. Several rounds of ATP-dependent interactions between DnaJ, DnaK and GrpE are required for fully efficient folding. Also involved, together with DnaK and GrpE, in the DNA replication of plasmids through activation of initiation proteins. This chain is Chaperone protein DnaJ, found in Listeria monocytogenes serotype 4a (strain HCC23).